Reading from the N-terminus, the 490-residue chain is Bifunctional protein HldE (490 aa).

The tract at residues 1–330 (MERKNVESLF…GSMGFQHSDS (330 aa)) is ribokinase. 205–208 (NRKE) is a binding site for ATP. Aspartate 275 is an active-site residue. Residues 356-490 (FTNGCFDLLH…DKILRAYGEE (135 aa)) are cytidylyltransferase.

It in the N-terminal section; belongs to the carbohydrate kinase PfkB family. This sequence in the C-terminal section; belongs to the cytidylyltransferase family. In terms of assembly, homodimer.

It catalyses the reaction D-glycero-beta-D-manno-heptose 7-phosphate + ATP = D-glycero-beta-D-manno-heptose 1,7-bisphosphate + ADP + H(+). It carries out the reaction D-glycero-beta-D-manno-heptose 1-phosphate + ATP + H(+) = ADP-D-glycero-beta-D-manno-heptose + diphosphate. The protein operates within nucleotide-sugar biosynthesis; ADP-L-glycero-beta-D-manno-heptose biosynthesis; ADP-L-glycero-beta-D-manno-heptose from D-glycero-beta-D-manno-heptose 7-phosphate: step 1/4. It functions in the pathway nucleotide-sugar biosynthesis; ADP-L-glycero-beta-D-manno-heptose biosynthesis; ADP-L-glycero-beta-D-manno-heptose from D-glycero-beta-D-manno-heptose 7-phosphate: step 3/4. Functionally, catalyzes the phosphorylation of D-glycero-D-manno-heptose 7-phosphate at the C-1 position to selectively form D-glycero-beta-D-manno-heptose-1,7-bisphosphate. In terms of biological role, catalyzes the ADP transfer from ATP to D-glycero-beta-D-manno-heptose 1-phosphate, yielding ADP-D-glycero-beta-D-manno-heptose. In Geobacter metallireducens (strain ATCC 53774 / DSM 7210 / GS-15), this protein is Bifunctional protein HldE.